Consider the following 91-residue polypeptide: Small ribosomal subunit protein uS19 (91 aa).

It belongs to the universal ribosomal protein uS19 family.

Functionally, protein S19 forms a complex with S13 that binds strongly to the 16S ribosomal RNA. The chain is Small ribosomal subunit protein uS19 from Methylacidiphilum infernorum (isolate V4) (Methylokorus infernorum (strain V4)).